The chain runs to 156 residues: Ribonuclease H (156 aa).

An RNase H type-1 domain is found at 3-144 (ELKLIHIFTD…CDVLARTAAE (142 aa)). Residues aspartate 12, glutamate 50, aspartate 72, and aspartate 136 each coordinate Mg(2+).

It belongs to the RNase H family. In terms of assembly, monomer. Mg(2+) is required as a cofactor.

The protein resides in the cytoplasm. It catalyses the reaction Endonucleolytic cleavage to 5'-phosphomonoester.. Functionally, endonuclease that specifically degrades the RNA of RNA-DNA hybrids. This chain is Ribonuclease H, found in Shewanella baltica (strain OS223).